Consider the following 512-residue polypeptide: Ribose import ATP-binding protein RbsA 2 (512 aa).

2 consecutive ABC transporter domains span residues 7 to 242 (LEIR…VGRE) and 257 to 498 (LGEP…SGIG). Position 39 to 46 (39 to 46 (GENGAGKS)) interacts with ATP.

This sequence belongs to the ABC transporter superfamily. Ribose importer (TC 3.A.1.2.1) family. The complex is composed of an ATP-binding protein (RbsA), two transmembrane proteins (RbsC) and a solute-binding protein (RbsB).

It localises to the cell inner membrane. It carries out the reaction D-ribose(out) + ATP + H2O = D-ribose(in) + ADP + phosphate + H(+). Functionally, part of the ABC transporter complex RbsABC involved in ribose import. Responsible for energy coupling to the transport system. This chain is Ribose import ATP-binding protein RbsA 2, found in Rhizobium meliloti (strain 1021) (Ensifer meliloti).